Consider the following 160-residue polypeptide: Globin-like protein (160 aa).

Positions 2-152 (SMTRQEIQDL…FNAECQVHLK (151 aa)) constitute a Globin domain. Position 101 (H101) interacts with heme.

The protein belongs to the globin family.

The protein resides in the cytoplasm. Functionally, may be a globin and may play a role in oxygen transport. The sequence is that of Globin-like protein (glb-1) from Caenorhabditis briggsae.